A 626-amino-acid polypeptide reads, in one-letter code: Myelin-associated glycoprotein (626 aa).

The first 19 residues, 1–19 (MIFLTALPLFWIMISASRG), serve as a signal peptide directing secretion. The segment at 20 to 325 (GHWGAWMPSS…RTVGLSVMYA (306 aa)) is interaction with RTN4R and RTN4RL2. Over 20 to 516 (GHWGAWMPSS…HRLMWAKIGP (497 aa)) the chain is Extracellular. Positions 22–120 (WGAWMPSSIS…LGGKYYFRGD (99 aa)) constitute an Ig-like V-type domain. 3 cysteine pairs are disulfide-bonded: cysteine 37/cysteine 165, cysteine 42/cysteine 100, and cysteine 159/cysteine 217. 65 to 67 (YPK) contributes to the a ganglioside GT1b (d18:1(4E)) binding site. Residue asparagine 99 is glycosylated (N-linked (GlcNAc...) asparagine). A glycan (N-linked (GlcNAc...) asparagine; partial) is linked at asparagine 106. Residues arginine 118 and 124 to 128 (YNQYT) contribute to the a ganglioside GT1b (d18:1(4E)) site. 4 Ig-like C2-type domains span residues 139–237 (NTPN…MDVK), 241–325 (VIVE…VMYA), 327–412 (WKPT…VEFA), and 413–508 (PVLL…GAHR). N-linked (GlcNAc...) asparagine glycans are attached at residues asparagine 223 and asparagine 246. Cysteines 261 and 305 form a disulfide. Residue asparagine 315 is glycosylated (N-linked (GlcNAc...) asparagine). Cysteine 347 and cysteine 392 are joined by a disulfide. N-linked (GlcNAc...) asparagine glycosylation occurs at asparagine 406. 2 cysteine pairs are disulfide-bonded: cysteine 421/cysteine 430 and cysteine 432/cysteine 488. Asparagine 450 and asparagine 454 each carry an N-linked (GlcNAc...) asparagine glycan. A helical membrane pass occupies residues 517 to 536 (VGAVVAFAILIAIVCYITQT). A lipid anchor (S-palmitoyl cysteine) is attached at cysteine 531. The Cytoplasmic portion of the chain corresponds to 537-626 (RRKKNVTESP…LAEYAEIRVK (90 aa)). A phosphoserine mark is found at serine 545, serine 547, and serine 549. Residues 577 to 626 (LGSERRLLGLRGEPPELDLSYSHSDLGKRPTKDSYTLTEELAEYAEIRVK) form a required for normal axon myelination in the central nervous system region. The tract at residues 582-608 (RLLGLRGEPPELDLSYSHSDLGKRPTK) is disordered.

The protein belongs to the immunoglobulin superfamily. SIGLEC (sialic acid binding Ig-like lectin) family. In terms of assembly, monomer and homodimer. Interacts (via the first three N-terminal Ig-like domains) with RTN4R and RTN4RL2. Interacts with RTN4R. Interacts with isoform 2 of BSG. In terms of processing, N-glycosylated. Post-translationally, phosphorylated on tyrosine residues. Ubiquitinated, leading to proteasomal degradation. Both isoform 1 and isoform 2 are detected in myelinated structures in the central and peripheral nervous system, in periaxonal myelin and at Schmidt-Lanterman incisures. Detected in optic nerve, in oligodendroglia and in periaxonal myelin sheaths. Detected in compact myelin (at protein level). Both isoform 1 and isoform 2 are detected in the central and peripheral nervous system.

Its subcellular location is the cell membrane. It localises to the membrane raft. Its function is as follows. Adhesion molecule that mediates interactions between myelinating cells and neurons by binding to neuronal sialic acid-containing gangliosides and to the glycoproteins RTN4R and RTN4RL2. Not required for initial myelination, but seems to play a role in the maintenance of normal axon myelination. Protects motoneurons against apoptosis, also after injury; protection against apoptosis is probably mediated via interaction with neuronal RTN4R and RTN4RL2. Required to prevent degeneration of myelinated axons in adults; this probably depends on binding to gangliosides on the axon cell membrane. Negative regulator of neurite outgrowth; in dorsal root ganglion neurons the inhibition is mediated primarily via binding to neuronal RTN4R or RTN4RL2 and to a lesser degree via binding to neuronal gangliosides. In cerebellar granule cells the inhibition is mediated primarily via binding to neuronal gangliosides. In sensory neurons, inhibition of neurite extension depends only partially on RTN4R, RTN4RL2 and gangliosides. Inhibits axon longitudinal growth. Inhibits axon outgrowth by binding to RTN4R. Preferentially binds to alpha-2,3-linked sialic acid. Binds ganglioside Gt1b. This Homo sapiens (Human) protein is Myelin-associated glycoprotein (MAG).